Consider the following 91-residue polypeptide: DNA-directed RNA polymerase subunit omega (91 aa).

The protein belongs to the RNA polymerase subunit omega family. As to quaternary structure, the RNAP catalytic core consists of 2 alpha, 1 beta, 1 beta' and 1 omega subunit. When a sigma factor is associated with the core the holoenzyme is formed, which can initiate transcription.

The enzyme catalyses RNA(n) + a ribonucleoside 5'-triphosphate = RNA(n+1) + diphosphate. Promotes RNA polymerase assembly. Latches the N- and C-terminal regions of the beta' subunit thereby facilitating its interaction with the beta and alpha subunits. The chain is DNA-directed RNA polymerase subunit omega from Proteus mirabilis (strain HI4320).